Reading from the N-terminus, the 212-residue chain is uncharacterized protein (212 aa).

3 consecutive Pentapeptide repeat domains span residues 63 to 102 (VSFR…KMVG), 103 to 142 (MNVA…ALMQ), and 143 to 182 (SECS…RFEQ).

This is an uncharacterized protein from Bacillus subtilis (strain 168).